The following is a 608-amino-acid chain: DNA ligase (608 aa).

Glu-266 serves as a coordination point for ATP. The N6-AMP-lysine intermediate role is filled by Lys-268. Residues Arg-273, Arg-288, Glu-318, Phe-358, Arg-435, and Lys-441 each contribute to the ATP site.

The protein belongs to the ATP-dependent DNA ligase family. It depends on Mg(2+) as a cofactor. Mn(2+) serves as cofactor.

The enzyme catalyses ATP + (deoxyribonucleotide)n-3'-hydroxyl + 5'-phospho-(deoxyribonucleotide)m = (deoxyribonucleotide)n+m + AMP + diphosphate.. It carries out the reaction ADP + (deoxyribonucleotide)n-3'-hydroxyl + 5'-phospho-(deoxyribonucleotide)m = (deoxyribonucleotide)n+m + AMP + phosphate.. The catalysed reaction is GTP + (deoxyribonucleotide)n-3'-hydroxyl + 5'-phospho-(deoxyribonucleotide)m = (deoxyribonucleotide)n+m + GMP + diphosphate.. Functionally, DNA ligase that seals nicks in double-stranded DNA during DNA replication, DNA recombination and DNA repair. Can use ATP, ADP and GTP, but not CTP, TTP or NAD(+). The chain is DNA ligase from Hyperthermus butylicus (strain DSM 5456 / JCM 9403 / PLM1-5).